We begin with the raw amino-acid sequence, 554 residues long: Wee1-like protein kinase 2-B (554 aa).

Disordered stretches follow at residues 1-86 (MRMA…GGEC) and 145-182 (TLVNVNPFTPQSYRQTHFQPNGKRKERPEDDCSSDSQM). S38 is modified (phosphoserine). 2 stretches are compositionally biased toward polar residues: residues 38–48 (SPVSSWRTNNC) and 147–163 (VNVNPFTPQSYRQTHFQ). In terms of domain architecture, Protein kinase spans 213-487 (FLEIEKIGAG…AKNSVLRRCV (275 aa)). ATP is bound by residues 219–227 (IGAGEFGSV) and K242. The active-site Proton acceptor is D340. Positions 345 and 377 each coordinate Mg(2+). Residues 490-516 (AAELQKQLNVEKFKTAMLERELQAAKL) are a coiled coil.

This sequence belongs to the protein kinase superfamily. Ser/Thr protein kinase family. WEE1 subfamily. In terms of assembly, interacts with cdca3. Post-translationally, ubiquitinated and degraded at the onset of G2/M phase. Phosphorylated during M and G1 phases. Interacts with cdca3 when phosphorylated at Ser-38.

The protein resides in the nucleus. The catalysed reaction is L-tyrosyl-[protein] + ATP = O-phospho-L-tyrosyl-[protein] + ADP + H(+). Its function is as follows. Oocyte and early embryo-specific protein tyrosine kinase that phosphorylates and inhibits cdk1 and acts as a regulator of meiosis in oocytes. Required to ensure the meiotic cell cycle in oocytes by phosphorylating cdk1 at 'Tyr-15', leading to inhibit cdk1 activity and prevent meiosis. The polypeptide is Wee1-like protein kinase 2-B (wee2-b) (Xenopus laevis (African clawed frog)).